We begin with the raw amino-acid sequence, 224 residues long: ATP synthase subunit a (224 aa).

The next 6 membrane-spanning stretches (helical) occupy residues 17–37 (LSLN…IYWL), 72–92 (IFIS…FPYI), 99–119 (LTLT…YGWI), 125–145 (MFAH…MVCI), 170–190 (LLLT…VTFL), and 195–215 (IALL…FAVL).

The protein belongs to the ATPase A chain family. In terms of assembly, F-type ATPases have 2 components, CF(1) - the catalytic core - and CF(0) - the membrane proton channel. CF(1) has five subunits: alpha(3), beta(3), gamma(1), delta(1), epsilon(1). CF(0) has three main subunits: a, b and c.

It is found in the mitochondrion inner membrane. In terms of biological role, mitochondrial membrane ATP synthase (F(1)F(0) ATP synthase or Complex V) produces ATP from ADP in the presence of a proton gradient across the membrane which is generated by electron transport complexes of the respiratory chain. F-type ATPases consist of two structural domains, F(1) - containing the extramembraneous catalytic core and F(0) - containing the membrane proton channel, linked together by a central stalk and a peripheral stalk. During catalysis, ATP synthesis in the catalytic domain of F(1) is coupled via a rotary mechanism of the central stalk subunits to proton translocation. Key component of the proton channel; it may play a direct role in the translocation of protons across the membrane. The protein is ATP synthase subunit a (mt:ATPase6) of Drosophila simulans (Fruit fly).